We begin with the raw amino-acid sequence, 122 residues long: Large ribosomal subunit protein eL18 (122 aa).

This sequence belongs to the eukaryotic ribosomal protein eL18 family.

In Pyrobaculum aerophilum (strain ATCC 51768 / DSM 7523 / JCM 9630 / CIP 104966 / NBRC 100827 / IM2), this protein is Large ribosomal subunit protein eL18.